The sequence spans 352 residues: S-adenosylmethionine:tRNA ribosyltransferase-isomerase (352 aa).

It belongs to the QueA family. In terms of assembly, monomer.

The protein resides in the cytoplasm. The enzyme catalyses 7-aminomethyl-7-carbaguanosine(34) in tRNA + S-adenosyl-L-methionine = epoxyqueuosine(34) in tRNA + adenine + L-methionine + 2 H(+). Its pathway is tRNA modification; tRNA-queuosine biosynthesis. Functionally, transfers and isomerizes the ribose moiety from AdoMet to the 7-aminomethyl group of 7-deazaguanine (preQ1-tRNA) to give epoxyqueuosine (oQ-tRNA). This Gloeobacter violaceus (strain ATCC 29082 / PCC 7421) protein is S-adenosylmethionine:tRNA ribosyltransferase-isomerase.